We begin with the raw amino-acid sequence, 77 residues long: MSQSETFEKVKKIVIEQLSVENPDTVTPEASFANDLQADSLDTVELVMALEEEFDIEIPDEAAEKITTVQAAVDXIN.

Positions 4 to 77 constitute a Carrier domain; that stretch reads SETFEKVKKI…TVQAAVDXIN (74 aa). At S40 the chain carries O-(pantetheine 4'-phosphoryl)serine.

This sequence belongs to the acyl carrier protein (ACP) family. Post-translationally, 4'-phosphopantetheine is transferred from CoA to a specific serine of apo-ACP by AcpS. This modification is essential for activity because fatty acids are bound in thioester linkage to the sulfhydryl of the prosthetic group.

Its subcellular location is the cytoplasm. It participates in lipid metabolism; fatty acid biosynthesis. Its function is as follows. Carrier of the growing fatty acid chain in fatty acid biosynthesis. This chain is Acyl carrier protein, found in Anabaena variabilis.